A 632-amino-acid chain; its full sequence is Probable potassium transport system protein Kup 2 (632 aa).

Helical transmembrane passes span 19–39, 58–78, 110–130, 147–167, 178–198, 216–236, 257–277, 290–310, 347–367, 377–397, 404–424, and 429–449; these read FWGL…TSPL, MIVL…VTAK, MFLM…SMIT, PALE…LFAV, AFGP…IVHI, FLLS…LAVT, WLFF…ALVL, MVPE…TVIA, IYLP…VLLF, YGIA…VVIW, AAVA…FFSA, and LFEG…TIWT.

It belongs to the HAK/KUP transporter (TC 2.A.72) family.

The protein localises to the cell inner membrane. The enzyme catalyses K(+)(in) + H(+)(in) = K(+)(out) + H(+)(out). Its function is as follows. Transport of potassium into the cell. Likely operates as a K(+):H(+) symporter. This is Probable potassium transport system protein Kup 2 from Bradyrhizobium sp. (strain BTAi1 / ATCC BAA-1182).